The chain runs to 295 residues: Small ribosomal subunit protein uS2 (295 aa).

A disordered region spans residues 242 to 295 (APVEPTLARELAPEAPAPEAPAEEAPAAEAAPAAEAAPAAEAAPAEASSEEQAG). Residues 264–288 (EEAPAAEAAPAAEAAPAAEAAPAEA) are compositionally biased toward low complexity.

This sequence belongs to the universal ribosomal protein uS2 family.

The protein is Small ribosomal subunit protein uS2 of Phenylobacterium zucineum (strain HLK1).